Consider the following 362-residue polypeptide: Zinc phosphodiesterase ELAC protein 1 (362 aa).

Residues His-62, His-64, Asp-66, His-67, His-181, Asp-252, and His-312 each contribute to the Zn(2+) site. Asp-66 serves as the catalytic Proton acceptor.

The protein belongs to the RNase Z family. Homodimer. Zn(2+) serves as cofactor.

The protein localises to the cytoplasm. It localises to the cytosol. It is found in the nucleus. It catalyses the reaction Endonucleolytic cleavage of RNA, removing extra 3' nucleotides from tRNA precursor, generating 3' termini of tRNAs. A 3'-hydroxy group is left at the tRNA terminus and a 5'-phosphoryl group is left at the trailer molecule.. Functionally, zinc phosphodiesterase, which displays some tRNA 3'-processing endonuclease activity. Specifically involved in tRNA repair: acts downstream of the ribosome-associated quality control (RQC) pathway by removing a 2',3'-cyclic phosphate from tRNAs following cleavage by ANKZF1. tRNAs are then processed by TRNT1. The sequence is that of Zinc phosphodiesterase ELAC protein 1 (Elac1) from Mus musculus (Mouse).